Consider the following 262-residue polypeptide: tRNA pseudouridine synthase A (262 aa).

The Nucleophile role is filled by aspartate 51. Tyrosine 109 contributes to the substrate binding site.

It belongs to the tRNA pseudouridine synthase TruA family. Homodimer.

It catalyses the reaction uridine(38/39/40) in tRNA = pseudouridine(38/39/40) in tRNA. Formation of pseudouridine at positions 38, 39 and 40 in the anticodon stem and loop of transfer RNAs. This is tRNA pseudouridine synthase A from Dechloromonas aromatica (strain RCB).